We begin with the raw amino-acid sequence, 177 residues long: Bifunctional protein PyrR (177 aa).

The short motif at 99–111 (VVLVDDVLYTGRT) is the PRPP-binding element.

It belongs to the purine/pyrimidine phosphoribosyltransferase family. PyrR subfamily.

It catalyses the reaction UMP + diphosphate = 5-phospho-alpha-D-ribose 1-diphosphate + uracil. Regulates the transcription of the pyrimidine nucleotide (pyr) operon in response to exogenous pyrimidines. In terms of biological role, also displays a weak uracil phosphoribosyltransferase activity which is not physiologically significant. The protein is Bifunctional protein PyrR of Akkermansia muciniphila (strain ATCC BAA-835 / DSM 22959 / JCM 33894 / BCRC 81048 / CCUG 64013 / CIP 107961 / Muc).